Consider the following 281-residue polypeptide: Probable endonuclease 4 (281 aa).

Positions 67, 107, 142, 176, 179, 211, 224, 226, and 256 each coordinate Zn(2+).

It belongs to the AP endonuclease 2 family. Zn(2+) serves as cofactor.

The enzyme catalyses Endonucleolytic cleavage to 5'-phosphooligonucleotide end-products.. In terms of biological role, endonuclease IV plays a role in DNA repair. It cleaves phosphodiester bonds at apurinic or apyrimidinic (AP) sites, generating a 3'-hydroxyl group and a 5'-terminal sugar phosphate. The polypeptide is Probable endonuclease 4 (Alkaliphilus oremlandii (strain OhILAs) (Clostridium oremlandii (strain OhILAs))).